The primary structure comprises 57 residues: Small ribosomal subunit protein bS21 (57 aa).

Residues 24–57 form a disordered region; sequence SKSGTLQESRKREFYEKPSVKRKKKSEAARKRKF. Residues 31 to 42 are compositionally biased toward basic and acidic residues; the sequence is ESRKREFYEKPS. A compositionally biased stretch (basic residues) spans 43–57; sequence VKRKKKSEAARKRKF.

It belongs to the bacterial ribosomal protein bS21 family.

The sequence is that of Small ribosomal subunit protein bS21 (rpsU) from Listeria innocua serovar 6a (strain ATCC BAA-680 / CLIP 11262).